The chain runs to 192 residues: Thiamine transporter ThiT (192 aa).

Transmembrane regions (helical) follow at residues 10 to 30 (LIEI…SGMF), 31 to 51 (LSMP…LISF), 57 to 77 (AGLT…NLFA), 81 to 101 (VQLL…GCFA), 123 to 143 (AVFI…AVFF), and 164 to 184 (YMVP…MTAP).

Belongs to the vitamin uptake transporter (VUT/ECF) (TC 2.A.88) family. Thiamine transporter subfamily. In terms of assembly, forms a stable energy-coupling factor (ECF) transporter complex composed of a membrane-embedded substrate-binding protein (S component), two ATP-binding proteins (A components) and a transmembrane protein (T component).

The protein resides in the cell membrane. In terms of biological role, probably a thiamine-binding protein that interacts with the energy-coupling factor (ECF) ABC-transporter complex. Unlike classic ABC transporters this ECF transporter provides the energy necessary to transport a number of different substrates. The substrates themselves are bound by transmembrane, not extracytoplasmic soluble proteins. This Bacillus subtilis (strain 168) protein is Thiamine transporter ThiT (thiT).